We begin with the raw amino-acid sequence, 217 residues long: 3,4-dihydroxy-2-butanone 4-phosphate synthase (217 aa).

Residues 37-38 (RE), Asp-42, 150-154 (RRGHT), and Glu-174 contribute to the D-ribulose 5-phosphate site. Mg(2+) is bound at residue Glu-38. His-153 is a Mg(2+) binding site.

It belongs to the DHBP synthase family. In terms of assembly, homodimer. Mg(2+) is required as a cofactor. Requires Mn(2+) as cofactor.

The enzyme catalyses D-ribulose 5-phosphate = (2S)-2-hydroxy-3-oxobutyl phosphate + formate + H(+). The protein operates within cofactor biosynthesis; riboflavin biosynthesis; 2-hydroxy-3-oxobutyl phosphate from D-ribulose 5-phosphate: step 1/1. In terms of biological role, catalyzes the conversion of D-ribulose 5-phosphate to formate and 3,4-dihydroxy-2-butanone 4-phosphate. This Tolumonas auensis (strain DSM 9187 / NBRC 110442 / TA 4) protein is 3,4-dihydroxy-2-butanone 4-phosphate synthase.